We begin with the raw amino-acid sequence, 384 residues long: Chaperone protein DnaJ (384 aa).

The region spanning 5-70 (DYYEVLGVSK…DKKAAYDRYG (66 aa)) is the J domain. Residues 16–47 (ASSDDIKKGYRRKAKELHPDRNKDDPNAEAQF) form a disordered region. A compositionally biased stretch (basic and acidic residues) spans 31–47 (ELHPDRNKDDPNAEAQF). The CR-type zinc finger occupies 143-221 (GLQKTINVPT…CQGAGRVEKD (79 aa)). Cys156, Cys159, Cys173, Cys176, Cys195, Cys198, Cys209, and Cys212 together coordinate Zn(2+). 4 CXXCXGXG motif repeats span residues 156 to 163 (CKTCNGSG), 173 to 180 (CPTCSGMG), 195 to 202 (CPTCSGLG), and 209 to 216 (CKSCQGAG).

This sequence belongs to the DnaJ family. Homodimer. Requires Zn(2+) as cofactor.

It is found in the cytoplasm. Its function is as follows. Participates actively in the response to hyperosmotic and heat shock by preventing the aggregation of stress-denatured proteins and by disaggregating proteins, also in an autonomous, DnaK-independent fashion. Unfolded proteins bind initially to DnaJ; upon interaction with the DnaJ-bound protein, DnaK hydrolyzes its bound ATP, resulting in the formation of a stable complex. GrpE releases ADP from DnaK; ATP binding to DnaK triggers the release of the substrate protein, thus completing the reaction cycle. Several rounds of ATP-dependent interactions between DnaJ, DnaK and GrpE are required for fully efficient folding. Also involved, together with DnaK and GrpE, in the DNA replication of plasmids through activation of initiation proteins. The sequence is that of Chaperone protein DnaJ from Roseobacter denitrificans (strain ATCC 33942 / OCh 114) (Erythrobacter sp. (strain OCh 114)).